Reading from the N-terminus, the 95-residue chain is Co-chaperonin GroES (95 aa).

The protein belongs to the GroES chaperonin family. Heptamer of 7 subunits arranged in a ring. Interacts with the chaperonin GroEL.

The protein resides in the cytoplasm. Together with the chaperonin GroEL, plays an essential role in assisting protein folding. The GroEL-GroES system forms a nano-cage that allows encapsulation of the non-native substrate proteins and provides a physical environment optimized to promote and accelerate protein folding. GroES binds to the apical surface of the GroEL ring, thereby capping the opening of the GroEL channel. In Bordetella petrii (strain ATCC BAA-461 / DSM 12804 / CCUG 43448), this protein is Co-chaperonin GroES.